The primary structure comprises 116 residues: Vesicle-associated membrane protein 2 (116 aa).

The interval 1 to 33 is disordered; the sequence is MSATAATAPPAAPAGEGGPPAPPPNLTSNRRLQ. Serine 2 carries the post-translational modification N-acetylserine. The Cytoplasmic segment spans residues 2–94; sequence SATAATAPPA…KRKYWWKNLK (93 aa). The region spanning 31–91 is the v-SNARE coiled-coil homology domain; that stretch reads RLQQTQAQVD…AKLKRKYWWK (61 aa). The required for interaction with SEPT8 stretch occupies residues 92–116; that stretch reads NLKMMIILGVICAIILIIIIVYFST. The helical; Anchor for type IV membrane protein transmembrane segment at 95–114 threads the bilayer; it reads MMIILGVICAIILIIIIVYF. The Vesicular portion of the chain corresponds to 115-116; it reads ST.

It belongs to the synaptobrevin family. In terms of assembly, part of the SNARE core complex containing SNAP25, VAMP2 and STX1A; this complex constitutes the basic catalytic machinery of the complex neurotransmitter release apparatus. Recruited to the SNARE complex following binding of the SNARE complex component STX1A to STXBP1. This complex binds to CPLX1. Interacts with POPDC1 and STX4. Interacts with VAPA and VAPB. Interacts with WDFY2, PRKCZ and PRKCI. Forms a complex with WDFY2 and PRKCZ. Interacts (via N-terminus) with KCNB1 (via N-terminus and C-terminus); stimulates the channel inactivation rate of KCNB1. Interacts with SEPT8; the interaction inhibits interaction of VAMP2 with SYP. Interacts with SYP; the interaction is inhibited by interaction with SEPT8. Interacts with PICALM. Interacts with alpha-synuclein/SNCA. Interacts with STX3. Phosphorylated by PRKCZ in vitro and this phosphorylation is increased in the presence of WDFY2. In terms of processing, (Microbial infection) Targeted and hydrolyzed by C.botulinum neurotoxin type B (BoNT/B, botB) which hydrolyzes the 76-Gln-|-Phe-77 bond and probably inhibits neurotransmitter release. Post-translationally, (Microbial infection) Targeted and hydrolyzed by C.botulinum neurotoxin type D (BoNT/D, botD) which probably hydrolyzes the 59-Lys-|-Leu-60 bond and inhibits neurotransmitter release. Note that humans are not known to be infected by C.botulinum type D. (Microbial infection) Targeted and hydrolyzed by C.botulinum neurotoxin type F (BoNT/F, botF) which hydrolyzes the 58-Gln-|-Lys-59 bond and probably inhibits neurotransmitter release. In terms of processing, (Microbial infection) Targeted and hydrolyzed by C.tetani tetanus toxin (tetX) which hydrolyzes the 76-Gln-|-Phe-77 bond and probably inhibits neurotransmitter release. In terms of tissue distribution, nervous system and skeletal muscle.

Its subcellular location is the cytoplasmic vesicle. It localises to the secretory vesicle. It is found in the synaptic vesicle membrane. The protein localises to the cell membrane. In terms of biological role, involved in the targeting and/or fusion of transport vesicles to their target membrane. Major SNARE protein of synaptic vesicles which mediates fusion of synaptic vesicles to release neurotransmitters. Essential for fast vesicular exocytosis and activity-dependent neurotransmitter release as well as fast endocytosis that mediates rapid reuse of synaptic vesicles. Modulates the gating characteristics of the delayed rectifier voltage-dependent potassium channel KCNB1. The chain is Vesicle-associated membrane protein 2 from Homo sapiens (Human).